Reading from the N-terminus, the 432-residue chain is D-amino acid dehydrogenase (432 aa).

3 to 17 (VLVLGSGVVGTASAY) provides a ligand contact to FAD.

It belongs to the DadA oxidoreductase family. Requires FAD as cofactor.

The catalysed reaction is a D-alpha-amino acid + A + H2O = a 2-oxocarboxylate + AH2 + NH4(+). It participates in amino-acid degradation; D-alanine degradation; NH(3) and pyruvate from D-alanine: step 1/1. In terms of biological role, oxidative deamination of D-amino acids. This chain is D-amino acid dehydrogenase, found in Stutzerimonas stutzeri (strain A1501) (Pseudomonas stutzeri).